A 65-amino-acid chain; its full sequence is Small ribosomal subunit protein eS17 (65 aa).

This sequence belongs to the eukaryotic ribosomal protein eS17 family.

This chain is Small ribosomal subunit protein eS17, found in Archaeoglobus fulgidus (strain ATCC 49558 / DSM 4304 / JCM 9628 / NBRC 100126 / VC-16).